A 308-amino-acid chain; its full sequence is Probable very-long-chain enoyl-CoA reductase art-1 (308 aa).

In terms of domain architecture, Ubiquitin-like spans 7 to 85 (VYDAKRTDNL…VLYVRDLGPQ (79 aa)). Transmembrane regions (helical) follow at residues 112 to 132 (FIYG…IAFF), 169 to 189 (WGFA…PPAF), 194 to 214 (VYFG…IHIL), and 255 to 275 (WIFF…TAGF).

Belongs to the steroid 5-alpha reductase family.

The protein localises to the endoplasmic reticulum membrane. It carries out the reaction a very-long-chain 2,3-saturated fatty acyl-CoA + NADP(+) = a very-long-chain (2E)-enoyl-CoA + NADPH + H(+). It participates in lipid metabolism; fatty acid biosynthesis. Catalyzes the last of the four reactions of the long-chain fatty acids elongation cycle. This endoplasmic reticulum-bound enzymatic process, allows the addition of 2 carbons to the chain of long- and very long-chain fatty acids/VLCFAs per cycle. This enzyme reduces the trans-2,3-enoyl-CoA fatty acid intermediate to an acyl-CoA that can be further elongated by entering a new cycle of elongation. Thereby, it participates in the production of VLCFAs of different chain lengths that are involved in multiple biological processes as precursors of membrane lipids and lipid mediators. The polypeptide is Probable very-long-chain enoyl-CoA reductase art-1 (art-1) (Caenorhabditis elegans).